The chain runs to 271 residues: 3-methyl-2-oxobutanoate hydroxymethyltransferase (271 aa).

Mg(2+)-binding residues include aspartate 50 and aspartate 89. 3-methyl-2-oxobutanoate-binding positions include 50 to 51 (DS), aspartate 89, and lysine 118. Glutamate 120 provides a ligand contact to Mg(2+). The active-site Proton acceptor is glutamate 187.

This sequence belongs to the PanB family. Homodecamer; pentamer of dimers. It depends on Mg(2+) as a cofactor.

It localises to the cytoplasm. The catalysed reaction is 3-methyl-2-oxobutanoate + (6R)-5,10-methylene-5,6,7,8-tetrahydrofolate + H2O = 2-dehydropantoate + (6S)-5,6,7,8-tetrahydrofolate. It functions in the pathway cofactor biosynthesis; (R)-pantothenate biosynthesis; (R)-pantoate from 3-methyl-2-oxobutanoate: step 1/2. Catalyzes the reversible reaction in which hydroxymethyl group from 5,10-methylenetetrahydrofolate is transferred onto alpha-ketoisovalerate to form ketopantoate. This chain is 3-methyl-2-oxobutanoate hydroxymethyltransferase, found in Campylobacter concisus (strain 13826).